The following is a 795-amino-acid chain: Phenylalanine--tRNA ligase beta subunit (795 aa).

The tRNA-binding domain maps to 39-148 (AGSFHGVVVG…ADAPIGTDIR (110 aa)). Positions 401–476 (PKRATITLRR…RVYGYNNIPD (76 aa)) constitute a B5 domain. 4 residues coordinate Mg(2+): D454, D460, E463, and E464. The FDX-ACB domain occupies 701-794 (SRFPANRRDI…LKERFQASLR (94 aa)).

The protein belongs to the phenylalanyl-tRNA synthetase beta subunit family. Type 1 subfamily. Tetramer of two alpha and two beta subunits. Requires Mg(2+) as cofactor.

The protein localises to the cytoplasm. The catalysed reaction is tRNA(Phe) + L-phenylalanine + ATP = L-phenylalanyl-tRNA(Phe) + AMP + diphosphate + H(+). The sequence is that of Phenylalanine--tRNA ligase beta subunit from Shigella boydii serotype 4 (strain Sb227).